The primary structure comprises 374 residues: Queuine tRNA-ribosyltransferase (374 aa).

The active-site Proton acceptor is aspartate 95. Substrate-binding positions include 95-99, aspartate 149, glutamine 191, and glycine 218; that span reads DSGGF. Residues 249–255 are RNA binding; that stretch reads GVGTYRE. Aspartate 268 serves as the catalytic Nucleophile. The RNA binding; important for wobble base 34 recognition stretch occupies residues 273–277; that stretch reads TRWAR. The Zn(2+) site is built by cysteine 306, cysteine 308, cysteine 311, and histidine 337.

Belongs to the queuine tRNA-ribosyltransferase family. As to quaternary structure, homodimer. Within each dimer, one monomer is responsible for RNA recognition and catalysis, while the other monomer binds to the replacement base PreQ1. The cofactor is Zn(2+).

The enzyme catalyses 7-aminomethyl-7-carbaguanine + guanosine(34) in tRNA = 7-aminomethyl-7-carbaguanosine(34) in tRNA + guanine. Its pathway is tRNA modification; tRNA-queuosine biosynthesis. Functionally, catalyzes the base-exchange of a guanine (G) residue with the queuine precursor 7-aminomethyl-7-deazaguanine (PreQ1) at position 34 (anticodon wobble position) in tRNAs with GU(N) anticodons (tRNA-Asp, -Asn, -His and -Tyr). Catalysis occurs through a double-displacement mechanism. The nucleophile active site attacks the C1' of nucleotide 34 to detach the guanine base from the RNA, forming a covalent enzyme-RNA intermediate. The proton acceptor active site deprotonates the incoming PreQ1, allowing a nucleophilic attack on the C1' of the ribose to form the product. After dissociation, two additional enzymatic reactions on the tRNA convert PreQ1 to queuine (Q), resulting in the hypermodified nucleoside queuosine (7-(((4,5-cis-dihydroxy-2-cyclopenten-1-yl)amino)methyl)-7-deazaguanosine). This chain is Queuine tRNA-ribosyltransferase, found in Nostoc sp. (strain PCC 7120 / SAG 25.82 / UTEX 2576).